The chain runs to 86 residues: Protein Tat (86 aa).

The interaction with human CREBBP stretch occupies residues methionine 1–asparagine 24. Residues methionine 1 to glycine 48 are transactivation. Zn(2+) contacts are provided by cysteine 22, cysteine 25, and cysteine 27. Residues cysteine 22–cysteine 37 are cysteine-rich. Lysine 28 carries the post-translational modification N6-acetyllysine; by host PCAF. Zn(2+) is bound by residues cysteine 30, histidine 33, cysteine 34, and cysteine 37. A core region spans residues phenylalanine 38–glycine 48. Residues glycine 48 to threonine 58 show a composition bias toward basic residues. Positions glycine 48–lysine 86 are disordered. The short motif at arginine 49–glycine 57 is the Nuclear localization signal, RNA-binding (TAR), and protein transduction element. The segment at arginine 49 to lysine 86 is interaction with the host capping enzyme RNGTT. 2 positions are modified to N6-acetyllysine; by host EP300 and GCN5L2: lysine 50 and lysine 51. Asymmetric dimethylarginine; by host PRMT6 is present on residues arginine 52 and arginine 53. A Glycyl lysine isopeptide (Lys-Gly) (interchain with G-Cter in ubiquitin) cross-link involves residue lysine 71.

It belongs to the lentiviruses Tat family. As to quaternary structure, interacts with host CCNT1. Associates with the P-TEFb complex composed at least of Tat, P-TEFb (CDK9 and CCNT1), TAR RNA, RNA Pol II. Recruits the HATs CREBBP, TAF1/TFIID, EP300, PCAF and GCN5L2. Interacts with host KAT5/Tip60; this interaction targets the latter to degradation. Interacts with the host deacetylase SIRT1. Interacts with host capping enzyme RNGTT; this interaction stimulates RNGTT. Binds to host KDR, and to the host integrins ITGAV/ITGB3 and ITGA5/ITGB1. Interacts with host KPNB1/importin beta-1 without previous binding to KPNA1/importin alpha-1. Interacts with EIF2AK2. Interacts with host nucleosome assembly protein NAP1L1; this interaction may be required for the transport of Tat within the nucleus, since the two proteins interact at the nuclear rim. Interacts with host C1QBP/SF2P32; this interaction involves lysine-acetylated Tat. Interacts with the host chemokine receptors CCR2, CCR3 and CXCR4. Interacts with host DPP4/CD26; this interaction may trigger an anti-proliferative effect. Interacts with host LDLR. Interacts with the host extracellular matrix metalloproteinase MMP1. Interacts with host PRMT6; this interaction mediates Tat's methylation. Interacts with, and is ubiquitinated by MDM2/Hdm2. Interacts with host PSMC3 and HTATIP2. Interacts with STAB1; this interaction may overcome SATB1-mediated repression of IL2 and IL2RA (interleukin) in T cells by binding to the same domain than HDAC1. Interacts (when acetylated) with human CDK13, thereby increasing HIV-1 mRNA splicing and promoting the production of the doubly spliced HIV-1 protein Nef. Interacts with host TBP; this interaction modulates the activity of transcriptional pre-initiation complex. Interacts with host RELA. Interacts with host PLSCR1; this interaction negatively regulates Tat transactivation activity by altering its subcellular distribution. Asymmetrical arginine methylation by host PRMT6 seems to diminish the transactivation capacity of Tat and affects the interaction with host CCNT1. Post-translationally, acetylation by EP300, CREBBP, GCN5L2/GCN5 and PCAF regulates the transactivation activity of Tat. EP300-mediated acetylation of Lys-50 promotes dissociation of Tat from the TAR RNA through the competitive binding to PCAF's bromodomain. In addition, the non-acetylated Tat's N-terminus can also interact with PCAF. PCAF-mediated acetylation of Lys-28 enhances Tat's binding to CCNT1. Lys-50 is deacetylated by SIRT1. In terms of processing, polyubiquitination by host MDM2 does not target Tat to degradation, but activates its transactivation function and fosters interaction with CCNT1 and TAR RNA. Phosphorylated by EIF2AK2 on serine and threonine residues adjacent to the basic region important for TAR RNA binding and function. Phosphorylation of Tat by EIF2AK2 is dependent on the prior activation of EIF2AK2 by dsRNA.

It localises to the host nucleus. The protein resides in the host nucleolus. Its subcellular location is the host cytoplasm. It is found in the secreted. Its function is as follows. Transcriptional activator that increases RNA Pol II processivity, thereby increasing the level of full-length viral transcripts. Recognizes a hairpin structure at the 5'-LTR of the nascent viral mRNAs referred to as the transactivation responsive RNA element (TAR) and recruits the cyclin T1-CDK9 complex (P-TEFb complex) that will in turn hyperphosphorylate the RNA polymerase II to allow efficient elongation. The CDK9 component of P-TEFb and other Tat-activated kinases hyperphosphorylate the C-terminus of RNA Pol II that becomes stabilized and much more processive. Other factors such as HTATSF1/Tat-SF1, SUPT5H/SPT5, and HTATIP2 are also important for Tat's function. Besides its effect on RNA Pol II processivity, Tat induces chromatin remodeling of proviral genes by recruiting the histone acetyltransferases (HATs) CREBBP, EP300 and PCAF to the chromatin. This also contributes to the increase in proviral transcription rate, especially when the provirus integrates in transcriptionally silent region of the host genome. To ensure maximal activation of the LTR, Tat mediates nuclear translocation of NF-kappa-B by interacting with host RELA. Through its interaction with host TBP, Tat may also modulate transcription initiation. Tat can reactivate a latently infected cell by penetrating in it and transactivating its LTR promoter. In the cytoplasm, Tat is thought to act as a translational activator of HIV-1 mRNAs. Functionally, extracellular circulating Tat can be endocytosed by surrounding uninfected cells via the binding to several surface receptors such as CD26, CXCR4, heparan sulfate proteoglycans (HSPG) or LDLR. Neurons are rarely infected, but they internalize Tat via their LDLR. Through its interaction with nuclear HATs, Tat is potentially able to control the acetylation-dependent cellular gene expression. Modulates the expression of many cellular genes involved in cell survival, proliferation or in coding for cytokines or cytokine receptors. Tat plays a role in T-cell and neurons apoptosis. Tat induced neurotoxicity and apoptosis probably contribute to neuroAIDS. Circulating Tat also acts as a chemokine-like and/or growth factor-like molecule that binds to specific receptors on the surface of the cells, affecting many cellular pathways. In the vascular system, Tat binds to ITGAV/ITGB3 and ITGA5/ITGB1 integrins dimers at the surface of endothelial cells and competes with bFGF for heparin-binding sites, leading to an excess of soluble bFGF. The polypeptide is Protein Tat (Human immunodeficiency virus type 1 group M subtype H (isolate VI991) (HIV-1)).